Consider the following 121-residue polypeptide: MRSKFKDEHPFEKRKAEAERIRQKYSDRIPVICEKVEKSDIATIDKKKYLVPADLTVGQFVYVIRKRIKLSPEKAIFIFVDEVLPPTAALMSSIYEEHKDEDGFLYITYSGENTFGDFETA.

The Phosphatidylethanolamine amidated glycine moiety is linked to residue glycine 116. The propeptide at 117–121 (DFETA) is removed in mature form.

It belongs to the ATG8 family. In terms of processing, the C-terminal 5 residues are removed to expose Gly-116 at the C-terminus. The C-terminal Gly is then amidated with phosphatidylethanolamine by an activating system similar to that for ubiquitin.

It localises to the cytoplasmic vesicle. It is found in the autophagosome membrane. The protein localises to the vacuole membrane. In terms of biological role, ubiquitin-like modifier involved in autophagosome formation. With cpr-1/atg4, mediates the delivery of the autophagosomes to the vacuole via the microtubule cytoskeleton. Required for selective autophagic degradation of the nucleus (nucleophagy) as well as for mitophagy which contributes to regulate mitochondrial quantity and quality by eliminating the mitochondria to a basal level to fulfill cellular energy requirements and preventing excess ROS production. Also participates in membrane fusion events that take place in the early secretory pathway. Also involved in endoplasmic reticulum-specific autophagic process and is essential for the survival of cells subjected to severe ER stress. The apg-6/atg8-PE conjugate mediates tethering between adjacent membranes and stimulates membrane hemifusion, leading to expansion of the autophagosomal membrane during autophagy. The protein is Autophagy-related protein 8 (apg-6) of Neurospora crassa (strain ATCC 24698 / 74-OR23-1A / CBS 708.71 / DSM 1257 / FGSC 987).